Reading from the N-terminus, the 233-residue chain is NAD(P)H-hydrate epimerase (233 aa).

The YjeF N-terminal domain occupies 10-217 (AINVDLELFN…ALQRKYELNL (208 aa)). 60–64 (NNGGD) is a (6S)-NADPHX binding site. Asn61 and Asp125 together coordinate K(+). (6S)-NADPHX contacts are provided by residues 129 to 135 (GFSFKPP) and Asp158. Ser161 serves as a coordination point for K(+).

The protein belongs to the NnrE/AIBP family. K(+) serves as cofactor.

The catalysed reaction is (6R)-NADHX = (6S)-NADHX. The enzyme catalyses (6R)-NADPHX = (6S)-NADPHX. In terms of biological role, catalyzes the epimerization of the S- and R-forms of NAD(P)HX, a damaged form of NAD(P)H that is a result of enzymatic or heat-dependent hydration. This is a prerequisite for the S-specific NAD(P)H-hydrate dehydratase to allow the repair of both epimers of NAD(P)HX. This is NAD(P)H-hydrate epimerase from Drosophila grimshawi (Hawaiian fruit fly).